The sequence spans 683 residues: DNA-directed RNA polymerase subunit beta' (683 aa).

Zn(2+) contacts are provided by cysteine 69, cysteine 71, cysteine 87, and cysteine 90. Residues aspartate 489, aspartate 491, and aspartate 493 each coordinate Mg(2+).

The protein belongs to the RNA polymerase beta' chain family. RpoC1 subfamily. In plastids the minimal PEP RNA polymerase catalytic core is composed of four subunits: alpha, beta, beta', and beta''. When a (nuclear-encoded) sigma factor is associated with the core the holoenzyme is formed, which can initiate transcription. Requires Mg(2+) as cofactor. Zn(2+) serves as cofactor.

It is found in the plastid. The protein resides in the chloroplast. The catalysed reaction is RNA(n) + a ribonucleoside 5'-triphosphate = RNA(n+1) + diphosphate. Functionally, DNA-dependent RNA polymerase catalyzes the transcription of DNA into RNA using the four ribonucleoside triphosphates as substrates. In Zea mays (Maize), this protein is DNA-directed RNA polymerase subunit beta'.